A 243-amino-acid chain; its full sequence is MTTLFISDLHLTPSRTDITECFVQFMRNEAVNAEALYVLGDLFEFWIGDEDCTPFAERIRNEFKALTTSGVPVYFIQGNRDFLLGQRFCRETGITLLDDVCTIDLYGEKVVILHGDTLCIDDLKYQEFRKTVHQRWLQWIFKRIPWFIKKRIVAKVQSGVRDDKQHKSLEIMDVNQQEVAQVMSQFCVKLMIHGHTHRPNIHHFEHDNLPLTRIVLGDWYSQGSVLKVTADGYSLEQRPFFTE.

Mn(2+) is bound by residues Asp-8, His-10, Asp-41, Asn-79, and His-114. Position 79-80 (79-80 (NR)) interacts with substrate. The substrate site is built by Asp-122, Lys-164, Lys-167, and His-195. Residues His-195 and His-197 each contribute to the Mn(2+) site.

This sequence belongs to the LpxH family. It depends on Mn(2+) as a cofactor.

It localises to the cell inner membrane. It carries out the reaction UDP-2-N,3-O-bis[(3R)-3-hydroxytetradecanoyl]-alpha-D-glucosamine + H2O = 2-N,3-O-bis[(3R)-3-hydroxytetradecanoyl]-alpha-D-glucosaminyl 1-phosphate + UMP + 2 H(+). The protein operates within glycolipid biosynthesis; lipid IV(A) biosynthesis; lipid IV(A) from (3R)-3-hydroxytetradecanoyl-[acyl-carrier-protein] and UDP-N-acetyl-alpha-D-glucosamine: step 4/6. In terms of biological role, hydrolyzes the pyrophosphate bond of UDP-2,3-diacylglucosamine to yield 2,3-diacylglucosamine 1-phosphate (lipid X) and UMP by catalyzing the attack of water at the alpha-P atom. Involved in the biosynthesis of lipid A, a phosphorylated glycolipid that anchors the lipopolysaccharide to the outer membrane of the cell. The sequence is that of UDP-2,3-diacylglucosamine hydrolase from Vibrio vulnificus (strain CMCP6).